The primary structure comprises 215 residues: Large ribosomal subunit protein uL3 (215 aa).

Gln-156 carries the N5-methylglutamine modification.

This sequence belongs to the universal ribosomal protein uL3 family. Part of the 50S ribosomal subunit. Forms a cluster with proteins L14 and L19. In terms of processing, methylated by PrmB.

In terms of biological role, one of the primary rRNA binding proteins, it binds directly near the 3'-end of the 23S rRNA, where it nucleates assembly of the 50S subunit. In Xylella fastidiosa (strain 9a5c), this protein is Large ribosomal subunit protein uL3.